We begin with the raw amino-acid sequence, 1377 residues long: DNA-directed RNA polymerase subunit beta (1377 aa).

Belongs to the RNA polymerase beta chain family. In terms of assembly, the RNAP catalytic core consists of 2 alpha, 1 beta, 1 beta' and 1 omega subunit. When a sigma factor is associated with the core the holoenzyme is formed, which can initiate transcription.

It carries out the reaction RNA(n) + a ribonucleoside 5'-triphosphate = RNA(n+1) + diphosphate. Its function is as follows. DNA-dependent RNA polymerase catalyzes the transcription of DNA into RNA using the four ribonucleoside triphosphates as substrates. This chain is DNA-directed RNA polymerase subunit beta, found in Cereibacter sphaeroides (strain ATCC 17029 / ATH 2.4.9) (Rhodobacter sphaeroides).